The primary structure comprises 371 residues: Neuropeptide Y receptor type 6 (371 aa).

Over 1–31 (MEVLTNQPTPNKTSGKSNNSAFFYFESCQPP) the chain is Extracellular. N-linked (GlcNAc...) asparagine glycosylation is found at N11 and N18. A helical membrane pass occupies residues 32–52 (FLAILLLLIAYTVILIMGIFG). The Cytoplasmic portion of the chain corresponds to 53–82 (NLSLIIIIFKKQREAQNVTNILIANLSLSD). The helical transmembrane segment at 83–103 (ILVCVMCIPFTVIYTLMDHWV) threads the bilayer. Residues 104-111 (FGNTMCKL) lie on the Extracellular side of the membrane. A disulfide bridge links C109 with C196. Residues 112-132 (TSYVQSVSVSVSIFSLVLIAI) form a helical membrane-spanning segment. Residues 133-150 (ERYQLIVNPRGWKPRVAH) are Cytoplasmic-facing. A helical membrane pass occupies residues 151 to 171 (AYWGIILIWLISLTLSIPLFL). Over 172–206 (SYHLTNEPFHNLSLPTDIYTHQVACVEIWPSKLNQ) the chain is Extracellular. N182 is a glycosylation site (N-linked (GlcNAc...) asparagine). The helical transmembrane segment at 207–227 (LLFSTSLFMLQYFVPLGFILI) threads the bilayer. Residues 228 to 263 (CYLKIVLCLRKRTRQVDRRKENKSRLNENKRVNVML) are Cytoplasmic-facing. Residues 264–284 (ISIVVTFGACWLPLNIFNVIF) traverse the membrane as a helical segment. Residues 285–297 (DWYHEMLMSCHHD) are Extracellular-facing. A helical membrane pass occupies residues 298-318 (LVFVVCHLIAMVSTCINPLFY). The Cytoplasmic segment spans residues 319-371 (GFLNKNFQKDLMMLIHHCWCGEPQESYENIAMSTMHTDESKGSLKLAHIPTGI). A lipid anchor (S-palmitoyl cysteine) is attached at C336.

This sequence belongs to the G-protein coupled receptor 1 family. In terms of tissue distribution, kidney and discrete regions of the hypothalamus including the suprachiasmatic nucleus, anterior hypothalamus, bed nucleus stria terminalis, and the ventromedial nucleus.

It is found in the cell membrane. Its function is as follows. Receptor for neuropeptide Y and peptide YY. The rank order of affinity of this receptor for pancreatic polypeptides is NPY = PYY &gt;= NPY (2-36) = [Leu-31, Pro-34] NPY &gt; NPY (13-36) &gt; PP. The activity of this receptor is mediated by G proteins that inhibits adenylate cyclase activity. The protein is Neuropeptide Y receptor type 6 (Npy6r) of Mus musculus (Mouse).